An 842-amino-acid polypeptide reads, in one-letter code: Pentatricopeptide repeat-containing protein At3g22690 (842 aa).

PPR repeat units follow at residues 98-132, 133-167, 168-202, 203-234, 235-269, 270-300, 301-335, 336-370, 371-401, 402-436, 437-463, 469-503, 504-534, 535-569, 570-605, and 606-636; these read TCFMYNSLIRGYASSGLCNEAILLFLRMMNSGISP, DKYTFPFGLSACAKSRAKGNGIQIHGLIVKMGYAK, DLFVQNSLVHFYAECGELDSARKVFDEMSERNVVS, WTSMICGYARRDFAKDAVDLFFRMVRDEEVTP, NSVTMVCVISACAKLEDLETGEKVYAFIRNSGIEV, NDLMVSALVDMYMKCNAIDVAKRLFDEYGAS, NLDLCNAMASNYVRQGLTREALGVFNLMMDSGVRP, DRISMLSAISSCSQLRNILWGKSCHGYVLRNGFES, WDNICNALIDMYMKCHRQDTAFRIFDRMSNK, TVVTWNSIVAGYVENGEVDAAWETFETMPEKNIVS, WNTIISGLVQGSLFEEAIEVFCSMQSQ, DGVTMMSIASACGHLGALDLAKWIYYYIEKNGIQL, DVRLGTTLVDMFSRCGDPESAMSIFNSLTNR, DVSAWTAAIGAMAMAGNAERAIELFDDMIEQGLKP, DGVAFVGALTACSHGGLVQQGKEIFYSMLKLHGVSP, and EDVHYGCMVDLLGRAGLLEEAVQLIEDMPME. Positions 641–716 are type E motif; it reads IWNSLLAACR…PPGTSSIQIR (76 aa). A type E(+) motif region spans residues 717-747; it reads GKTHEFTSGDESHPEMPNIEAMLDEVSQRAS. The segment at 748–842 is type DYW motif; that stretch reads HLGHVPDLSN…QGKCSCGDFW (95 aa).

Belongs to the PPR family. PCMP-H subfamily.

This chain is Pentatricopeptide repeat-containing protein At3g22690 (PCMP-H56), found in Arabidopsis thaliana (Mouse-ear cress).